The chain runs to 194 residues: Holliday junction branch migration complex subunit RuvA (194 aa).

The tract at residues 1–61 is domain I; it reads MYDFLTGIIK…DNQISLYGFK (61 aa). Positions 62 to 139 are domain II; the sequence is TVKERNLFQK…GDFSKNIAPM (78 aa). The flexible linker stretch occupies residues 139-143; it reads MKNLL. Positions 144–194 are domain III; the sequence is ENSAELDDALAALVALGFSSKEVNKINPKLASLGELTTDAYIQKGLKLLTK.

The protein belongs to the RuvA family. In terms of assembly, homotetramer. Forms an RuvA(8)-RuvB(12)-Holliday junction (HJ) complex. HJ DNA is sandwiched between 2 RuvA tetramers; dsDNA enters through RuvA and exits via RuvB. An RuvB hexamer assembles on each DNA strand where it exits the tetramer. Each RuvB hexamer is contacted by two RuvA subunits (via domain III) on 2 adjacent RuvB subunits; this complex drives branch migration. In the full resolvosome a probable DNA-RuvA(4)-RuvB(12)-RuvC(2) complex forms which resolves the HJ.

Its subcellular location is the cytoplasm. Its function is as follows. The RuvA-RuvB-RuvC complex processes Holliday junction (HJ) DNA during genetic recombination and DNA repair, while the RuvA-RuvB complex plays an important role in the rescue of blocked DNA replication forks via replication fork reversal (RFR). RuvA specifically binds to HJ cruciform DNA, conferring on it an open structure. The RuvB hexamer acts as an ATP-dependent pump, pulling dsDNA into and through the RuvAB complex. HJ branch migration allows RuvC to scan DNA until it finds its consensus sequence, where it cleaves and resolves the cruciform DNA. The protein is Holliday junction branch migration complex subunit RuvA of Oenococcus oeni (strain ATCC BAA-331 / PSU-1).